We begin with the raw amino-acid sequence, 404 residues long: Ubiquitin-like modifier-activating enzyme 5 (404 aa).

A Phosphoserine modification is found at Ser-45. ATP is bound by residues Gly-83, Asp-104, Lys-127, Asn-150, and Asn-184. Zn(2+) is bound by residues Cys-226 and Cys-229. The active-site Glycyl thioester intermediate is the Cys-250. Zn(2+) is bound by residues Cys-303 and Cys-308. The UFM1-interacting sequence (UIS) motif lies at 334–346 (IIHEDNEWGIELV). A linker region spans residues 347 to 377 (SEVSEEELKNFSGPVPDLPEGITVAYTIPKK). A phosphoserine mark is found at Ser-358 and Ser-393. Positions 389–404 (DSGESLEDLMAKMKNM) match the UFC1-binding sequence (UFC) motif.

This sequence belongs to the ubiquitin-activating E1 family. UBA5 subfamily. As to quaternary structure, homodimer; homodimerization is required for UFM1 activation. Interacts (via UIS motif) with UFM1; binds UFM1 via a trans-binding mechanism in which UFM1 interacts with distinct sites in both subunits of the UBA5 homodimer. Interacts (via C-terminus) with UFC1. Interacts (via UIS motif) with GABARAPL2 and, with lower affinity, with GABARAP and GABARAPL1. As to expression, widely expressed.

Its subcellular location is the cytoplasm. The protein localises to the nucleus. It localises to the endoplasmic reticulum membrane. The protein resides in the golgi apparatus. E1-like enzyme which specifically catalyzes the first step in ufmylation. Activates UFM1 by first adenylating its C-terminal glycine residue with ATP, and thereafter linking this residue to the side chain of a cysteine residue in E1, yielding a UFM1-E1 thioester and free AMP. Activates UFM1 via a trans-binding mechanism, in which UFM1 interacts with distinct sites in both subunits of the UBA5 homodimer. Trans-binding also promotes stabilization of the UBA5 homodimer, and enhances ATP-binding. Transfer of UFM1 from UBA5 to the E2-like enzyme UFC1 also takes place using a trans mechanism. Ufmylation plays a key role in various processes, such as ribosome recycling, response to DNA damage, interferon response or reticulophagy (also called ER-phagy). Ufmylation is essential for erythroid differentiation of both megakaryocytes and erythrocytes. The sequence is that of Ubiquitin-like modifier-activating enzyme 5 from Homo sapiens (Human).